The sequence spans 348 residues: Rhodopsin (348 aa).

Met1 is subject to N-acetylmethionine. The Extracellular portion of the chain corresponds to 1–36 (MNGTEGPNFYVPFSNKTGVVRSPFEYPQYYLAEPWQ). N-linked (GlcNAc...) asparagine glycans are attached at residues Asn2 and Asn15. Residues 37-61 (FSMLAAYMFLLIVLGFPINFLTLYV) traverse the membrane as a helical segment. Residues 62–73 (TVQHKKLRTPLN) lie on the Cytoplasmic side of the membrane. The helical transmembrane segment at 74 to 96 (YILLNLAVADLFMVFGGFTTTLY) threads the bilayer. Topologically, residues 97–110 (TSLHGYFVFGPTGC) are extracellular. Residues Cys110 and Cys187 are joined by a disulfide bond. A helical transmembrane segment spans residues 111 to 133 (NVEGFFATLGGEIALWSLVVLAI). Residues 134–136 (ERY) carry the 'Ionic lock' involved in activated form stabilization motif. Topologically, residues 134–152 (ERYVVVCKPMSNFRFGENH) are cytoplasmic. A helical transmembrane segment spans residues 153–173 (AIMGVAFTWVMALACAAPPLA). The Extracellular segment spans residues 174–202 (GWSRYIPEGMQCSCGIDYYTLKPEVNNES). Glu201 is a binding site for Zn(2+). A helical transmembrane segment spans residues 203-224 (FVIYMFVVHFTIPMIVIFFCYG). Residues 225–252 (QLVFTVKEAAAQQQESATTQKAEKEVTR) lie on the Cytoplasmic side of the membrane. A helical membrane pass occupies residues 253 to 274 (MVIIMVIAFLICWVPYASVAFY). The Extracellular segment spans residues 275–286 (IFTHQGSNFGPI). Gln279 contributes to the Zn(2+) binding site. A helical transmembrane segment spans residues 287–308 (FMTLPAFFAKSASIYNPVIYIM). Lys296 is subject to N6-(retinylidene)lysine. The Cytoplasmic portion of the chain corresponds to 309–348 (MNKQFRNCMLTTICCGKNPFAEEEGATTVSKTETSQVAPA). 2 S-palmitoyl cysteine lipidation sites follow: Cys322 and Cys323. Residues 330–348 (EEEGATTVSKTETSQVAPA) form an interaction with SAG region. 2 positions are modified to phosphothreonine: Thr335 and Thr336. Position 338 is a phosphoserine (Ser338). Residues Thr340 and Thr342 each carry the phosphothreonine modification. Residue Ser343 is modified to Phosphoserine.

Belongs to the G-protein coupled receptor 1 family. Opsin subfamily. Homodimer. May form a complex composed of RHO, GRK1 and RCVRN in a Ca(2+)-dependent manner; RCVRN prevents the interaction between GRK1 and RHO. Interacts with GRK1. Interacts (phosphorylated form) with SAG. Interacts with GNAT1. Interacts with GNAT3. SAG and G-proteins compete for a common binding site. Interacts with PRCD; the interaction promotes PRCD stability. Forms a complex with ASAP1 and ARF4. Forms a complex with ASAP1, RAB11A, Rabin8/RAB3IP, ARF4 and RAB11FIP3; the complex regulates Golgi-to-cilia rhodopsin/RHO transport in photoreceptors. Phosphorylated on some or all of the serine and threonine residues present in the C-terminal region. In terms of processing, contains one covalently linked retinal chromophore. Upon light absorption, the covalently bound 11-cis-retinal is converted to all-trans-retinal. After hydrolysis of the Schiff base and release of the covalently bound all-trans-retinal, active rhodopsin is regenerated by binding of a fresh molecule of 11-cis-retinal.

It localises to the membrane. Its subcellular location is the cell projection. The protein localises to the cilium. It is found in the photoreceptor outer segment. Its function is as follows. Photoreceptor required for image-forming vision at low light intensity. Required for photoreceptor cell viability after birth. Light-induced isomerization of 11-cis to all-trans retinal triggers a conformational change that activates signaling via G-proteins. Subsequent receptor phosphorylation mediates displacement of the bound G-protein alpha subunit by the arrestin SAG and terminates signaling. In Trichechus manatus (Caribbean manatee), this protein is Rhodopsin (RHO).